The chain runs to 272 residues: MARVNEPFEGVIMYRRDYRERDLLVKILTDRRGPLMFFVRGAKRKGFKLASDILPFTYGSYVGILADEGLSYIVSAQETHHLTGIGADLNRNAYATYLLELVDQAFEEGRALGGWYKQVMAALNLINTGRDPQVVVNVLEVQLLNRFGIAPVWDRCVVCGRSDLPLDYSEKMGGMLCLHHFAEDPYRFHLTPKTVAYLRLFATLNLAKVDQVHVDEATKRQLGRTLDKIYDDQLGLRLKSKRFINEMDSWTNRLLTARKNPGTDDEKKPAGS.

It belongs to the RecO family.

Functionally, involved in DNA repair and RecF pathway recombination. This chain is DNA repair protein RecO, found in Limosilactobacillus fermentum (strain NBRC 3956 / LMG 18251) (Lactobacillus fermentum).